Here is a 480-residue protein sequence, read N- to C-terminus: Ochratoxinase (480 aa).

Residues H111, H113, K246, H287, and H307 each contribute to the Zn(2+) site. K246 is an active-site residue. Residue D378 is part of the active site.

The protein belongs to the metallo-dependent hydrolases superfamily. Ochratoxinase amidase 2 family. In terms of assembly, homooctamer. Zn(2+) is required as a cofactor.

It is found in the secreted. It carries out the reaction ochratoxin A + H2O = ochratoxin alpha + L-phenylalanine. With respect to regulation, the Zn(2+)-specific chelator 1,10-phenanthroline inhibits the enzyme activity. Carboxypeptidase that catalyzes the release of a C-terminal amino acid with specific catalytic activity for aromatic amino acids such as phenylalanine. Is able to degrade ochratoxin A, one of the five major mycotoxins most harmful to humans and animals that is produced by Aspergillus and Penicillium species and occurs in a wide range of agricultural products. In Aspergillus niger (strain ATCC MYA-4892 / CBS 513.88 / FGSC A1513), this protein is Ochratoxinase.